The following is a 249-amino-acid chain: tRNA (guanine-N(1)-)-methyltransferase (249 aa).

Residues Gly113 and 133–138 contribute to the S-adenosyl-L-methionine site; that span reads IGDYVL.

Belongs to the RNA methyltransferase TrmD family. In terms of assembly, homodimer.

It is found in the cytoplasm. It catalyses the reaction guanosine(37) in tRNA + S-adenosyl-L-methionine = N(1)-methylguanosine(37) in tRNA + S-adenosyl-L-homocysteine + H(+). Functionally, specifically methylates guanosine-37 in various tRNAs. This Aeromonas hydrophila subsp. hydrophila (strain ATCC 7966 / DSM 30187 / BCRC 13018 / CCUG 14551 / JCM 1027 / KCTC 2358 / NCIMB 9240 / NCTC 8049) protein is tRNA (guanine-N(1)-)-methyltransferase.